We begin with the raw amino-acid sequence, 596 residues long: Probable tripeptidyl-peptidase SED2 (596 aa).

An N-terminal signal peptide occupies residues 1–16 (MRLLKFVCLLASVAAA). The propeptide at 17–203 (KPTPGASHKV…LESMSVEEFA (187 aa)) is removed in mature form. The 387-residue stretch at 210-596 (LVTTACLREL…NFQALTKVLP (387 aa)) folds into the Peptidase S53 domain. Asparagine 265 carries an N-linked (GlcNAc...) asparagine glycan. Residues glutamate 286 and aspartate 290 each act as charge relay system in the active site. The N-linked (GlcNAc...) asparagine glycan is linked to asparagine 403. The active-site Charge relay system is serine 501. Residues aspartate 543 and isoleucine 544 each coordinate Ca(2+). Asparagine 572 carries an N-linked (GlcNAc...) asparagine glycan. The Ca(2+) site is built by glycine 576 and aspartate 578.

It depends on Ca(2+) as a cofactor.

It localises to the secreted. The protein localises to the extracellular space. It carries out the reaction Release of an N-terminal tripeptide from a polypeptide.. In terms of biological role, secreted tripeptidyl-peptidase which degrades proteins at acidic pHs and is involved in virulence. This chain is Probable tripeptidyl-peptidase SED2 (SED2), found in Trichophyton verrucosum (strain HKI 0517).